The following is a 1850-amino-acid chain: Serine/threonine-protein kinase WNK (1850 aa).

Disordered regions lie at residues 1–108 (MPDS…NALE), 221–253 (QHSI…NNDK), and 272–309 (MVND…EKAA). Composition is skewed to low complexity over residues 16–26 (SSVSSTTASTT) and 234–251 (PPNT…AANN). Positions 284-309 (DMDKMVSEEERARKEQEKREEEEKAA) are enriched in basic and acidic residues. Residues 334–596 (LKFDEELGRG…VKQLLVDDFF (263 aa)) form the Protein kinase domain. Residues serine 344, 416–419 (TELM), and lysine 466 each bind ATP. The Proton acceptor role is filled by aspartate 483. Positions 693–749 (DHRLLEIKRAKEEEERIREEAEIKEELRLRAEAKEKEKERLEKERLEKKAAAAAAAN) form a coiled coil. Residues 727-742 (EKEKERLEKERLEKKA) are compositionally biased toward basic and acidic residues. 7 disordered regions span residues 727-790 (EKEK…AQQP), 890-943 (TPAS…KRKS), 1040-1130 (EPPT…AAKP), 1188-1249 (SPVS…TPAI), 1588-1636 (GTHI…PSHS), 1721-1740 (ASLS…DNEG), and 1769-1850 (IIPS…IENV). Over residues 751–760 (NPTPIPPTPA) the composition is skewed to pro residues. Positions 776–790 (STQTSAEIQQSAQQP) are enriched in polar residues. Positions 890–934 (TPASIASPSPAPSATDVASTTAPVTPAPTPTTTTDGGAAAASTTT) are enriched in low complexity. Residues 1062–1071 (PKIEIEKTPP) show a composition bias toward basic and acidic residues. Residues 1077 to 1101 (QEPNNVQVTNVRKVSQESNAESVQS) are compositionally biased toward polar residues. Low complexity predominate over residues 1188–1207 (SPVSHSLSSNSSPSATTHSN). Positions 1208–1217 (MSSIQSTTSV) are enriched in polar residues. Over residues 1771–1805 (PSSRQSVRSATSSSPSTPPSSSSAPPKSLSSPTKS) the composition is skewed to low complexity. Over residues 1806–1820 (YVSHCSLSIGYGSTA) the composition is skewed to polar residues. The span at 1821-1832 (SSEQQQREPSPS) shows a compositional bias: low complexity.

Belongs to the protein kinase superfamily. Ser/Thr protein kinase family. WNK subfamily. In terms of assembly, interacts with gck-3 (via C-terminus). Mg(2+) is required as a cofactor. Expressed in pharynx, nervous system, hypodermis, spermatheca, excretory cell and canal and body wall muscles.

The protein localises to the cytoplasm. The catalysed reaction is L-seryl-[protein] + ATP = O-phospho-L-seryl-[protein] + ADP + H(+). It carries out the reaction L-threonyl-[protein] + ATP = O-phospho-L-threonyl-[protein] + ADP + H(+). Its activity is regulated as follows. Activated in response to hyperosmotic stress: cell shrinkage promotes formation of a membraneless compartment that concentrates wnk-1 with its downstrem substrates. In terms of biological role, serine/threonine-protein kinase component of the WNK3-SPAK/OSR1 kinase cascade, which plays an important role in the regulation of electrolyte homeostasis and regulatory volume increase in response to hyperosmotic stress. Wnk-1 mediates regulatory volume increase in response to hyperosmotic stress by acting as a molecular crowding sensor, which senses cell shrinkage and mediates formation of a membraneless compartment by undergoing liquid-liquid phase separation. The membraneless compartment concentrates wnk-1 with its substrates. Phosphorylates gck-3. Plays a role in osmotic stress responses during which it increases gpdh-1 translation, likely by phosphorylating gck-3. Essential for larval development and the tubular formation of the excretory canals. This is Serine/threonine-protein kinase WNK from Caenorhabditis elegans.